Consider the following 605-residue polypeptide: Glutamine--fructose-6-phosphate aminotransferase [isomerizing] (605 aa).

Cysteine 2 functions as the Nucleophile; for GATase activity in the catalytic mechanism. The Glutamine amidotransferase type-2 domain occupies 2-220 (CGIVGVTGKD…DGEIVVVKPD (219 aa)). 2 SIS domains span residues 286-426 (LLTA…VDQP) and 458-595 (AKSA…VDKP). Lysine 600 serves as the catalytic For Fru-6P isomerization activity.

Homodimer.

It localises to the cytoplasm. It carries out the reaction D-fructose 6-phosphate + L-glutamine = D-glucosamine 6-phosphate + L-glutamate. Its function is as follows. Catalyzes the first step in hexosamine metabolism, converting fructose-6P into glucosamine-6P using glutamine as a nitrogen source. The polypeptide is Glutamine--fructose-6-phosphate aminotransferase [isomerizing] (Lactiplantibacillus plantarum (strain ATCC BAA-793 / NCIMB 8826 / WCFS1) (Lactobacillus plantarum)).